The primary structure comprises 211 residues: Endo-1,4-beta-xylanase A (211 aa).

An N-terminal signal peptide occupies residues 1 to 27 (MKVTAAFAGLLVTAFAAPVPEPVLVSR). The GH11 domain maps to 28-210 (SAGINYVQNY…GAGSASVTIS (183 aa)). Residue Glu-106 is the Nucleophile of the active site. Cys-119 and Cys-138 are joined by a disulfide. Glu-197 (proton donor) is an active-site residue.

Belongs to the glycosyl hydrolase 11 (cellulase G) family.

It is found in the secreted. It carries out the reaction Endohydrolysis of (1-&gt;4)-beta-D-xylosidic linkages in xylans.. It participates in glycan degradation; xylan degradation. In terms of biological role, endo-1,4-beta-xylanase involved in the hydrolysis of xylan, a major structural heterogeneous polysaccharide found in plant biomass representing the second most abundant polysaccharide in the biosphere, after cellulose. This chain is Endo-1,4-beta-xylanase A (xynA), found in Aspergillus niger.